Here is a 62-residue protein sequence, read N- to C-terminus: YTLKCNKLVPLFYKTCPAGKNLCYKMFMMSNKTVPVKRGCIDVCPKNSALVKYVCCNTDRCN.

Positions 1 to 2 (YT) are cleaved as a signal peptide. Disulfide bonds link Cys-5–Cys-23, Cys-16–Cys-40, Cys-44–Cys-55, and Cys-56–Cys-61.

This sequence belongs to the three-finger toxin family. Short-chain subfamily. Type IA cytotoxin sub-subfamily. In terms of assembly, monomer in solution; Homodimer and oligomer in the presence of negatively charged lipids forming a pore with a size ranging between 20 and 30 Angstroms. As to expression, expressed by the venom gland.

The protein resides in the secreted. The protein localises to the target cell membrane. Its function is as follows. Shows cytolytic activity on many different cells by forming pore in lipid membranes. In vivo, increases heart rate or kills the animal by cardiac arrest. In addition, it binds to heparin with high affinity, interacts with Kv channel-interacting protein 1 (KCNIP1) in a calcium-independent manner, and binds to integrin alpha-V/beta-3 (ITGAV/ITGB3) with moderate affinity. This is Cytotoxin 7 from Naja sputatrix (Malayan spitting cobra).